The sequence spans 264 residues: Apolipoprotein A-I (264 aa).

The first 18 residues, 1–18, serve as a signal peptide directing secretion; sequence MRGVLVTLAVLFLTGTQA. A run of 2 repeats spans residues 67-88 and 89-110. Positions 67–264 are 10 X approximate tandem repeats; that stretch reads LKLADNLDTL…LLDEVQKTMA (198 aa). One copy of the 3; half-length repeat lies at 111 to 121; sequence KDLEEVKEKIR. 5 consecutive repeat copies span residues 122 to 143, 144 to 165, 166 to 187, 188 to 209, and 210 to 231. The stretch at 232–242 is one 9; half-length repeat; sequence PLVQEFKERLT. The stretch at 243–264 is repeat 10; the sequence is PYAENLKNRLIDLLDEVQKTMA.

The protein belongs to the apolipoprotein A1/A4/E family. In terms of tissue distribution, major protein of VLDL, HDL, LDL and in chylomicrons. Expressed in a number of tissues including liver, small intestine, lung, kidney, heart and muscle with highest expression in liver and small intestine.

It is found in the secreted. Participates in the reverse transport of cholesterol from tissues to the liver for excretion by promoting cholesterol efflux from tissues and by acting as a cofactor for the lecithin cholesterol acyltransferase (LCAT). The protein is Apolipoprotein A-I (APOA1) of Coturnix japonica (Japanese quail).